The primary structure comprises 314 residues: Ribosomal protein L11 methyltransferase (314 aa).

The S-adenosyl-L-methionine site is built by Thr161, Gly182, Asp204, and Asn248.

It belongs to the methyltransferase superfamily. PrmA family.

The protein localises to the cytoplasm. The enzyme catalyses L-lysyl-[protein] + 3 S-adenosyl-L-methionine = N(6),N(6),N(6)-trimethyl-L-lysyl-[protein] + 3 S-adenosyl-L-homocysteine + 3 H(+). In terms of biological role, methylates ribosomal protein L11. This is Ribosomal protein L11 methyltransferase from Listeria monocytogenes serotype 1/2a (strain 10403S).